We begin with the raw amino-acid sequence, 529 residues long: Bifunctional purine biosynthesis protein PurH (529 aa).

An MGS-like domain is found at 1–148 (MQQRRPVRRA…KNHKDVAIVV (148 aa)). Lysine 287 carries the N6-acetyllysine modification.

It belongs to the PurH family.

The catalysed reaction is (6R)-10-formyltetrahydrofolate + 5-amino-1-(5-phospho-beta-D-ribosyl)imidazole-4-carboxamide = 5-formamido-1-(5-phospho-D-ribosyl)imidazole-4-carboxamide + (6S)-5,6,7,8-tetrahydrofolate. The enzyme catalyses IMP + H2O = 5-formamido-1-(5-phospho-D-ribosyl)imidazole-4-carboxamide. The protein operates within purine metabolism; IMP biosynthesis via de novo pathway; 5-formamido-1-(5-phospho-D-ribosyl)imidazole-4-carboxamide from 5-amino-1-(5-phospho-D-ribosyl)imidazole-4-carboxamide (10-formyl THF route): step 1/1. It functions in the pathway purine metabolism; IMP biosynthesis via de novo pathway; IMP from 5-formamido-1-(5-phospho-D-ribosyl)imidazole-4-carboxamide: step 1/1. This chain is Bifunctional purine biosynthesis protein PurH, found in Shigella dysenteriae serotype 1 (strain Sd197).